The chain runs to 200 residues: Exopolysaccharide production protein PSS (200 aa).

The protein belongs to the bacterial sugar transferase family.

This is Exopolysaccharide production protein PSS (pss) from Rhizobium leguminosarum bv. phaseoli.